The primary structure comprises 665 residues: non-specific serine/threonine protein kinase (665 aa).

The 453-residue stretch at 145 to 597 folds into the Protein kinase domain; the sequence is FDVHCRIGSG…AEEALKHPFF (453 aa). Residues 151–159 and Lys181 each bind ATP; that span reads IGSGTFSTV. The active-site Proton acceptor is Asp268.

Belongs to the protein kinase superfamily. Ser/Thr protein kinase family. Interacts with chif (via N-terminus).

It catalyses the reaction L-seryl-[protein] + ATP = O-phospho-L-seryl-[protein] + ADP + H(+). The enzyme catalyses L-threonyl-[protein] + ATP = O-phospho-L-threonyl-[protein] + ADP + H(+). Probable serine/threonine protein kinase that forms a complex with the N-terminal peptide of the chiffon protein and may be involved in regulating meiotic processes in the male testis. The chain is non-specific serine/threonine protein kinase from Drosophila melanogaster (Fruit fly).